Here is a 501-residue protein sequence, read N- to C-terminus: MAILQSFLLLLSLPFLFTLIYTKKMKESKRNLPPGPAKLPIVGNLHQLQGMVHRCLHELSKKHGPVMHLQLGFVPLVLISSSEAAEEALKTHDIECCTRPNTNAARVFSRNNKNIGLGAYSDEWRELRKVAVREYFSVKKVQSFRYVREEENHLMVKKLRDLALKQSPVDLSKTLFCLAASTVFRPVFGQSFSDNKHFSEEKIEELVFEAQKSLTFKFSDLFPIPGLGWFIGFVSGQHKGLHKVFIEVDNFLNHMIDDHQKQNQPQDRSDIVGSLLDMIHNQEQDKSFKLTIDHLKGITQDIFLAGIDTSAITMIWAMAELVNNPRVMKKVQDEIRSCIGIKKERIEEEDVGKLQYLKLVIKETLRLHPAAPLLLPRETMADIKIQGYDIPRKTLLLVSAWSLGRDPKYWKNPEEFNPERFIDCPVDYKGHSFEFLPFGSGRRFCPGMASAIATIELTLLNLLYFFDWKLPEEMKDMNMEESGDVTIVKKVPLELLPVLYH.

The helical transmembrane segment at 1-21 threads the bilayer; sequence MAILQSFLLLLSLPFLFTLIY. Cys445 lines the heme pocket.

The protein belongs to the cytochrome P450 family. Requires heme as cofactor.

It is found in the membrane. This Arabidopsis thaliana (Mouse-ear cress) protein is Cytochrome P450 71B25 (CYP71B25).